Here is a 944-residue protein sequence, read N- to C-terminus: Nonsense-mediated mRNA decay factor SMG8 (944 aa).

Disordered stretches follow at residues 559–601 and 629–654; these read LNNG…SNCC and ASSEQLLNSEQNTTSSGTSSADTDNE. The span at 568 to 589 shows a compositional bias: acidic residues; that stretch reads QDEDAEEDEAEEEEGQEQEQPT. Residues 629 to 640 show a composition bias toward polar residues; sequence ASSEQLLNSEQN. The span at 641–650 shows a compositional bias: low complexity; that stretch reads TTSSGTSSAD.

It belongs to the SMG8 family.

Its function is as follows. Involved in nonsense-mediated decay (NMD) of mRNAs containing premature stop codons. Probable component of kinase complex containing nonC and recruited to stalled ribosomes. The polypeptide is Nonsense-mediated mRNA decay factor SMG8 (Drosophila melanogaster (Fruit fly)).